The sequence spans 249 residues: MRIIPAIDLKDGQCVRLFKGDMDQNTVYSDNPGETAKQWAEQGAERMHVVDLNGAFAGEPVNADAIAAIRKAITIPMQLGGGIRTLETLQKLFNLGVDFAILGSVAARDPELVFRACEQFPGRISVGIDARDGKVAVEGWAETTDLNAVDLAKKFEDAGVAEIIFTDIARDGTLTGPNVAATRLMAESATIPVIASGGVSCLADIQALLENSGPYPNGNRISGVITGKAIYDGRLDLAAAIALSRRWEN.

The active-site Proton acceptor is D8. Catalysis depends on D129, which acts as the Proton donor.

It belongs to the HisA/HisF family.

It localises to the cytoplasm. It carries out the reaction 1-(5-phospho-beta-D-ribosyl)-5-[(5-phospho-beta-D-ribosylamino)methylideneamino]imidazole-4-carboxamide = 5-[(5-phospho-1-deoxy-D-ribulos-1-ylimino)methylamino]-1-(5-phospho-beta-D-ribosyl)imidazole-4-carboxamide. It functions in the pathway amino-acid biosynthesis; L-histidine biosynthesis; L-histidine from 5-phospho-alpha-D-ribose 1-diphosphate: step 4/9. The chain is 1-(5-phosphoribosyl)-5-[(5-phosphoribosylamino)methylideneamino] imidazole-4-carboxamide isomerase from Magnetococcus marinus (strain ATCC BAA-1437 / JCM 17883 / MC-1).